A 148-amino-acid polypeptide reads, in one-letter code: Large ribosomal subunit protein bL9 (148 aa).

The protein belongs to the bacterial ribosomal protein bL9 family.

In terms of biological role, binds to the 23S rRNA. This Lachnoclostridium phytofermentans (strain ATCC 700394 / DSM 18823 / ISDg) (Clostridium phytofermentans) protein is Large ribosomal subunit protein bL9.